Consider the following 259-residue polypeptide: Ovulation prohormone (259 aa).

Positions 1 to 34 are cleaved as a signal peptide; sequence MKMSGLLSKPDYGVVGIVFTVVFCCWCSSSTTHA. The propeptide occupies 35-102; the sequence is LSIAEPGRDR…SGEKTRLTAA (68 aa). A disordered region spans residues 42 to 103; sequence RDRYDKRSPT…GEKTRLTAAK (62 aa). Repeats lie at residues 119–123 and 146–150; these read RLRFH. The segment at 119 to 150 is 2 X 5 AA repeats of R-L-R-F-H; sequence RLRFHKRRVDSADESNDDGFDRKAREPRLRFH. Residues 149-197 form a disordered region; the sequence is FHDVRKRSATAEEGSENAEIEESHLGNSRSRRSAGSAPSSANEVQRSKR. Positions 181–195 are excised as a propeptide; it reads SAGSAPSSANEVQRS. Leu233 carries the leucine amide modification. A propeptide spanning residues 237–259 is cleaved from the precursor; sequence GSAFFDHIPIIFGEPQYDYQPFK.

This sequence belongs to the molluscan ELH family.

It localises to the secreted. Its function is as follows. CDCH induces ovulation and egg-mass production; it may also stimulate synthesis of secretory products in the female accessory sex glands and affect neurons in the neuronal circuits controlling locomotion and feeding. Functionally, calfluxin is involved in the influx of calcium into mitochondria of the albumen gland. CDCA (or alpha-CDCP) triggers the electrical activity of the caudodorsal cells (CDCS). The polypeptide is Ovulation prohormone (Lymnaea stagnalis (Great pond snail)).